The chain runs to 256 residues: Cell division protein DivIB (256 aa).

At 1–23 (MSKDLISTDEYIKIKKKRKRIKK) the chain is on the cytoplasmic side. A helical membrane pass occupies residues 24 to 44 (IVVLFIFLISILVTLCLKIPY). In terms of domain architecture, POTRA spans 45–113 (FNIESIEIKG…NKLQIYVKER (69 aa)). Residues 45–256 (FNIESIEIKG…EGNPVFYIEK (212 aa)) lie on the Extracellular side of the membrane.

The protein belongs to the FtsQ/DivIB family. DivIB subfamily.

Its subcellular location is the cell membrane. Its function is as follows. Cell division protein that may be involved in stabilizing or promoting the assembly of the division complex. In Clostridium botulinum (strain Hall / ATCC 3502 / NCTC 13319 / Type A), this protein is Cell division protein DivIB.